A 407-amino-acid polypeptide reads, in one-letter code: Imidazolonepropionase (407 aa).

2 residues coordinate Fe(3+): His-75 and His-77. The Zn(2+) site is built by His-75 and His-77. 3 residues coordinate 4-imidazolone-5-propanoate: Arg-84, Tyr-142, and His-169. Residue Tyr-142 participates in N-formimidoyl-L-glutamate binding. His-232 contacts Fe(3+). His-232 serves as a coordination point for Zn(2+). Residue Gln-235 coordinates 4-imidazolone-5-propanoate. Asp-306 is a binding site for Fe(3+). Asp-306 provides a ligand contact to Zn(2+). Positions 308 and 310 each coordinate N-formimidoyl-L-glutamate. Thr-311 contributes to the 4-imidazolone-5-propanoate binding site.

This sequence belongs to the metallo-dependent hydrolases superfamily. HutI family. The cofactor is Zn(2+). Fe(3+) serves as cofactor.

The protein resides in the cytoplasm. It carries out the reaction 4-imidazolone-5-propanoate + H2O = N-formimidoyl-L-glutamate. The protein operates within amino-acid degradation; L-histidine degradation into L-glutamate; N-formimidoyl-L-glutamate from L-histidine: step 3/3. Catalyzes the hydrolytic cleavage of the carbon-nitrogen bond in imidazolone-5-propanoate to yield N-formimidoyl-L-glutamate. It is the third step in the universal histidine degradation pathway. This chain is Imidazolonepropionase, found in Rhodococcus jostii (strain RHA1).